The primary structure comprises 92 residues: Small ribosomal subunit protein uS15c (92 aa).

It belongs to the universal ribosomal protein uS15 family. In terms of assembly, part of the 30S ribosomal subunit.

It is found in the plastid. It localises to the chloroplast. The polypeptide is Small ribosomal subunit protein uS15c (rps15-A) (Lemna minor (Common duckweed)).